Reading from the N-terminus, the 578-residue chain is Probable arginine--tRNA ligase, mitochondrial (578 aa).

A mitochondrion-targeting transit peptide spans 1–16; sequence MACGFRRSIASQLSRV. L-arginine-binding positions include 133 to 135, His-144, Tyr-322, Asp-326, and Gln-350; that span reads SPN. Residues 133–144 carry the 'HIGH' region motif; the sequence is SPNVAKKFHVGH. Lys-568 carries the post-translational modification N6-acetyllysine.

It belongs to the class-I aminoacyl-tRNA synthetase family.

Its subcellular location is the mitochondrion membrane. It catalyses the reaction tRNA(Arg) + L-arginine + ATP = L-arginyl-tRNA(Arg) + AMP + diphosphate. In terms of biological role, catalyzes the attachment of arginine to tRNA(Arg) in a two-step reaction: arginine is first activated by ATP to form Arg-AMP and then transferred to the acceptor end of tRNA(Arg). The polypeptide is Probable arginine--tRNA ligase, mitochondrial (RARS2) (Bos taurus (Bovine)).